Reading from the N-terminus, the 659-residue chain is Pentatricopeptide repeat-containing protein At3g26782, mitochondrial (659 aa).

The transit peptide at 1–24 (MKVRSKKALFCSVSRLLHTERHTE) directs the protein to the mitochondrion. PPR repeat units follow at residues 40 to 74 (DVFS…SLYP), 75 to 109 (TRSS…GYQS), 110 to 144 (DIFV…NIVS), 145 to 171 (WTSM…LLVD), 182 to 216 (DSMG…GFDR), 217 to 249 (GVSV…IVDK), 250 to 284 (DRVS…KVVT), 286 to 320 (NAIT…GLED), 321 to 351 (DVIV…MKNK), 352 to 386 (NVRS…GVRP), 387 to 422 (NYIT…GVEP), and 423 to 453 (GLEH…MKMK). The tract at residues 458–533 (IWSSLLAACR…PPGFSLLELN (76 aa)) is type E motif. The type E(+) motif stretch occupies residues 534 to 564 (GEVHVFLIGDEEHPQREKIYEFLAELNRKLL). The type DYW motif stretch occupies residues 565–659 (EAGYVSNTSS…DGGCSCGDYW (95 aa)).

Belongs to the PPR family. PCMP-H subfamily.

The protein localises to the mitochondrion. This is Pentatricopeptide repeat-containing protein At3g26782, mitochondrial (PCMP-H34) from Arabidopsis thaliana (Mouse-ear cress).